The following is a 61-amino-acid chain: Small ribosomal subunit protein bS21 (61 aa).

Residues 40–61 form a disordered region; the sequence is KPSVKRKKKSEAARKRKNKRRF. Basic residues predominate over residues 43–61; sequence VKRKKKSEAARKRKNKRRF.

It belongs to the bacterial ribosomal protein bS21 family.

The protein is Small ribosomal subunit protein bS21 of Ligilactobacillus salivarius (strain UCC118) (Lactobacillus salivarius).